The chain runs to 393 residues: NAD(P)H-quinone oxidoreductase subunit H, chloroplastic (393 aa).

The protein belongs to the complex I 49 kDa subunit family. In terms of assembly, NDH is composed of at least 16 different subunits, 5 of which are encoded in the nucleus.

It localises to the plastid. Its subcellular location is the chloroplast thylakoid membrane. The enzyme catalyses a plastoquinone + NADH + (n+1) H(+)(in) = a plastoquinol + NAD(+) + n H(+)(out). It catalyses the reaction a plastoquinone + NADPH + (n+1) H(+)(in) = a plastoquinol + NADP(+) + n H(+)(out). Functionally, NDH shuttles electrons from NAD(P)H:plastoquinone, via FMN and iron-sulfur (Fe-S) centers, to quinones in the photosynthetic chain and possibly in a chloroplast respiratory chain. The immediate electron acceptor for the enzyme in this species is believed to be plastoquinone. Couples the redox reaction to proton translocation, and thus conserves the redox energy in a proton gradient. This Gossypium hirsutum (Upland cotton) protein is NAD(P)H-quinone oxidoreductase subunit H, chloroplastic.